Consider the following 341-residue polypeptide: Anthranilate phosphoribosyltransferase (341 aa).

5-phospho-alpha-D-ribose 1-diphosphate is bound by residues Gly-79, 82–83 (GD), Thr-87, 89–92 (NIST), 107–115 (KHGNRAVSS), and Ser-119. Position 79 (Gly-79) interacts with anthranilate. Ser-91 is a binding site for Mg(2+). Asn-110 contacts anthranilate. Arg-165 serves as a coordination point for anthranilate. 2 residues coordinate Mg(2+): Asp-224 and Glu-225.

It belongs to the anthranilate phosphoribosyltransferase family. As to quaternary structure, homodimer. Mg(2+) is required as a cofactor.

The enzyme catalyses N-(5-phospho-beta-D-ribosyl)anthranilate + diphosphate = 5-phospho-alpha-D-ribose 1-diphosphate + anthranilate. Its pathway is amino-acid biosynthesis; L-tryptophan biosynthesis; L-tryptophan from chorismate: step 2/5. Catalyzes the transfer of the phosphoribosyl group of 5-phosphorylribose-1-pyrophosphate (PRPP) to anthranilate to yield N-(5'-phosphoribosyl)-anthranilate (PRA). The sequence is that of Anthranilate phosphoribosyltransferase from Bacillus cereus (strain ATCC 14579 / DSM 31 / CCUG 7414 / JCM 2152 / NBRC 15305 / NCIMB 9373 / NCTC 2599 / NRRL B-3711).